We begin with the raw amino-acid sequence, 380 residues long: Cytochrome b (380 aa).

A run of 4 helical transmembrane segments spans residues 34–54, 78–99, 114–134, and 179–199; these read FGSL…FLAM, WLLR…YFHI, WYTG…GYIL, and FFTL…IHLL. The heme b site is built by His84 and His98. Heme b is bound by residues His183 and His197. His202 provides a ligand contact to a ubiquinone. A run of 4 helical transmembrane segments spans residues 227-247, 289-309, 321-341, and 348-368; these read YKDL…TLFL, LGGV…PTLH, FTQI…WIGA, and FIMI…LLIP.

This sequence belongs to the cytochrome b family. In terms of assembly, the cytochrome bc1 complex contains 3 respiratory subunits (MT-CYB, CYC1 and UQCRFS1), 2 core proteins (UQCRC1 and UQCRC2) and probably 6 low-molecular weight proteins. Heme b is required as a cofactor.

It localises to the mitochondrion inner membrane. Component of the ubiquinol-cytochrome c reductase complex (complex III or cytochrome b-c1 complex) that is part of the mitochondrial respiratory chain. The b-c1 complex mediates electron transfer from ubiquinol to cytochrome c. Contributes to the generation of a proton gradient across the mitochondrial membrane that is then used for ATP synthesis. The chain is Cytochrome b (MT-CYB) from Pelomedusa subrufa (African side-necked turtle).